A 218-amino-acid polypeptide reads, in one-letter code: uncharacterized protein (218 aa).

Residues 1–17 (MLKKIIILFLGIFLLSS) form the signal peptide. C18 carries the N-palmitoyl cysteine lipid modification. The S-diacylglycerol cysteine moiety is linked to residue C18. A coiled-coil region spans residues 136 to 164 (YKEKKIEEELNQIKAMLKETKRDITKYTC).

Its subcellular location is the cell membrane. This is an uncharacterized protein from Rickettsia typhi (strain ATCC VR-144 / Wilmington).